We begin with the raw amino-acid sequence, 307 residues long: UDP-3-O-acyl-N-acetylglucosamine deacetylase (307 aa).

Positions 78, 241, and 245 each coordinate Zn(2+). His-268 serves as the catalytic Proton donor.

This sequence belongs to the LpxC family. The cofactor is Zn(2+).

The enzyme catalyses a UDP-3-O-[(3R)-3-hydroxyacyl]-N-acetyl-alpha-D-glucosamine + H2O = a UDP-3-O-[(3R)-3-hydroxyacyl]-alpha-D-glucosamine + acetate. It functions in the pathway glycolipid biosynthesis; lipid IV(A) biosynthesis; lipid IV(A) from (3R)-3-hydroxytetradecanoyl-[acyl-carrier-protein] and UDP-N-acetyl-alpha-D-glucosamine: step 2/6. Its function is as follows. Catalyzes the hydrolysis of UDP-3-O-myristoyl-N-acetylglucosamine to form UDP-3-O-myristoylglucosamine and acetate, the committed step in lipid A biosynthesis. The polypeptide is UDP-3-O-acyl-N-acetylglucosamine deacetylase (Delftia acidovorans (strain DSM 14801 / SPH-1)).